A 237-amino-acid chain; its full sequence is Large ribosomal subunit protein uL1 (237 aa).

It belongs to the universal ribosomal protein uL1 family. In terms of assembly, part of the 50S ribosomal subunit.

Binds directly to 23S rRNA. The L1 stalk is quite mobile in the ribosome, and is involved in E site tRNA release. Functionally, protein L1 is also a translational repressor protein, it controls the translation of the L11 operon by binding to its mRNA. This Chloroflexus aurantiacus (strain ATCC 29364 / DSM 637 / Y-400-fl) protein is Large ribosomal subunit protein uL1.